We begin with the raw amino-acid sequence, 628 residues long: 1,4-alpha-glucan branching enzyme GlgB (628 aa).

D304 (nucleophile) is an active-site residue. E355 functions as the Proton donor in the catalytic mechanism.

This sequence belongs to the glycosyl hydrolase 13 family. GlgB subfamily. Monomer.

It carries out the reaction Transfers a segment of a (1-&gt;4)-alpha-D-glucan chain to a primary hydroxy group in a similar glucan chain.. It functions in the pathway glycan biosynthesis; glycogen biosynthesis. Catalyzes the formation of the alpha-1,6-glucosidic linkages in glycogen by scission of a 1,4-alpha-linked oligosaccharide from growing alpha-1,4-glucan chains and the subsequent attachment of the oligosaccharide to the alpha-1,6 position. This chain is 1,4-alpha-glucan branching enzyme GlgB, found in Streptococcus mutans serotype c (strain ATCC 700610 / UA159).